The sequence spans 207 residues: Imidazoleglycerol-phosphate dehydratase (207 aa).

Belongs to the imidazoleglycerol-phosphate dehydratase family.

It localises to the cytoplasm. It catalyses the reaction D-erythro-1-(imidazol-4-yl)glycerol 3-phosphate = 3-(imidazol-4-yl)-2-oxopropyl phosphate + H2O. It participates in amino-acid biosynthesis; L-histidine biosynthesis; L-histidine from 5-phospho-alpha-D-ribose 1-diphosphate: step 6/9. The chain is Imidazoleglycerol-phosphate dehydratase (hisB) from Azospirillum brasilense.